A 295-amino-acid polypeptide reads, in one-letter code: Cytidine deaminase (295 aa).

2 consecutive CMP/dCMP-type deaminase domains span residues 48–168 and 187–295; these read TDNQ…FGPS and EDDD…YLSL. 89-91 contacts substrate; the sequence is NME. Histidine 102 is a binding site for Zn(2+). Catalysis depends on glutamate 104, which acts as the Proton donor. Zn(2+) contacts are provided by cysteine 129 and cysteine 132.

It belongs to the cytidine and deoxycytidylate deaminase family. As to quaternary structure, homodimer. Requires Zn(2+) as cofactor.

The enzyme catalyses cytidine + H2O + H(+) = uridine + NH4(+). The catalysed reaction is 2'-deoxycytidine + H2O + H(+) = 2'-deoxyuridine + NH4(+). Its function is as follows. This enzyme scavenges exogenous and endogenous cytidine and 2'-deoxycytidine for UMP synthesis. The chain is Cytidine deaminase from Vibrio vulnificus (strain YJ016).